A 256-amino-acid chain; its full sequence is 5'-nucleotidase SurE (256 aa).

A divalent metal cation contacts are provided by Asp9, Asp10, Ser42, and Asn95.

The protein belongs to the SurE nucleotidase family. A divalent metal cation serves as cofactor.

The protein localises to the cytoplasm. It carries out the reaction a ribonucleoside 5'-phosphate + H2O = a ribonucleoside + phosphate. Its function is as follows. Nucleotidase that shows phosphatase activity on nucleoside 5'-monophosphates. This Campylobacter curvus (strain 525.92) protein is 5'-nucleotidase SurE.